Consider the following 430-residue polypeptide: Enolase (430 aa).

A (2R)-2-phosphoglycerate-binding site is contributed by glutamine 167. Glutamate 209 serves as the catalytic Proton donor. Mg(2+) is bound by residues aspartate 245, glutamate 286, and aspartate 313. Lysine 338, arginine 367, serine 368, and lysine 389 together coordinate (2R)-2-phosphoglycerate. Lysine 338 functions as the Proton acceptor in the catalytic mechanism.

This sequence belongs to the enolase family. It depends on Mg(2+) as a cofactor.

The protein localises to the cytoplasm. It localises to the secreted. It is found in the cell surface. The enzyme catalyses (2R)-2-phosphoglycerate = phosphoenolpyruvate + H2O. It functions in the pathway carbohydrate degradation; glycolysis; pyruvate from D-glyceraldehyde 3-phosphate: step 4/5. In terms of biological role, catalyzes the reversible conversion of 2-phosphoglycerate (2-PG) into phosphoenolpyruvate (PEP). It is essential for the degradation of carbohydrates via glycolysis. The chain is Enolase from Synechococcus sp. (strain CC9605).